The sequence spans 278 residues: Urease accessory protein UreD 3 (278 aa).

This sequence belongs to the UreD family. UreD, UreF and UreG form a complex that acts as a GTP-hydrolysis-dependent molecular chaperone, activating the urease apoprotein by helping to assemble the nickel containing metallocenter of UreC. The UreE protein probably delivers the nickel.

It is found in the cytoplasm. Its function is as follows. Required for maturation of urease via the functional incorporation of the urease nickel metallocenter. In Bradyrhizobium sp. (strain BTAi1 / ATCC BAA-1182), this protein is Urease accessory protein UreD 3.